Here is a 279-residue protein sequence, read N- to C-terminus: Thymidylate synthase (279 aa).

133–134 (RR) serves as a coordination point for dUMP. The Nucleophile role is filled by Cys-154. DUMP-binding positions include 178 to 181 (RSND), Asn-189, and 219 to 221 (HIY). A (6R)-5,10-methylene-5,6,7,8-tetrahydrofolate-binding site is contributed by Asp-181. Ala-278 is a (6R)-5,10-methylene-5,6,7,8-tetrahydrofolate binding site.

It belongs to the thymidylate synthase family. Bacterial-type ThyA subfamily. As to quaternary structure, homodimer.

The protein localises to the cytoplasm. The catalysed reaction is dUMP + (6R)-5,10-methylene-5,6,7,8-tetrahydrofolate = 7,8-dihydrofolate + dTMP. The protein operates within pyrimidine metabolism; dTTP biosynthesis. Functionally, catalyzes the reductive methylation of 2'-deoxyuridine-5'-monophosphate (dUMP) to 2'-deoxythymidine-5'-monophosphate (dTMP) while utilizing 5,10-methylenetetrahydrofolate (mTHF) as the methyl donor and reductant in the reaction, yielding dihydrofolate (DHF) as a by-product. This enzymatic reaction provides an intracellular de novo source of dTMP, an essential precursor for DNA biosynthesis. This Streptococcus pneumoniae (strain ATCC 700669 / Spain 23F-1) protein is Thymidylate synthase.